The chain runs to 365 residues: Glycine oxidase (365 aa).

FAD-binding positions include valine 12–isoleucine 13, aspartate 32–glutamine 33, serine 40–serine 41, glycine 45–isoleucine 47, and isoleucine 173. Arginine 302 serves as a coordination point for substrate. Histidine 327–valine 333 contributes to the FAD binding site.

The protein belongs to the DAO family. ThiO subfamily. As to quaternary structure, monomer. FAD serves as cofactor.

The catalysed reaction is glycine + O2 + H2O = glyoxylate + H2O2 + NH4(+). It catalyses the reaction sarcosine + O2 + H2O = methylamine + glyoxylate + H2O2. It participates in cofactor biosynthesis; thiamine diphosphate biosynthesis. Its function is as follows. Catalyzes the oxidation of glycine, leading to glyoxyl imine and hydrogen peroxide as primary products; glyoxyl imine is used for the biosynthesis of the thiazole ring of thiamine. Otherwise, glyoxyl imine is spontaneously hydrolyzed in water to produce glyoxylate and ammonia. Can also use sarcosine (N-methylglycine) as substrate, and, to a lesser extent, N-ethylglycine and D-proline. Has no activity towards other amino-acids D-Asp, D-Glu, D-Gln, D-His, D-Leu, D-Lys, D-ornithine, D-Trp, D-Val, L-Ala, L-Asp, L-Glu, L-His, L-Leu, L-Lys, L-Met and L-Pro. This Pseudomonas putida (strain ATCC 47054 / DSM 6125 / CFBP 8728 / NCIMB 11950 / KT2440) protein is Glycine oxidase.